The following is a 434-amino-acid chain: Ribosomal protein uS12 methylthiotransferase RimO (434 aa).

In terms of domain architecture, MTTase N-terminal spans 6-122; sequence SKLYLLTLGC…IIAELGGHYK (117 aa). Positions 15, 51, 85, 146, 150, and 153 each coordinate [4Fe-4S] cluster. The Radical SAM core domain occupies 132-361; the sequence is LTPPYFSYLK…MAAQEEIAYA (230 aa). The TRAM domain occupies 364-434; that stretch reads QALVGSFMPV…AFDLFGSLVL (71 aa).

This sequence belongs to the methylthiotransferase family. RimO subfamily. It depends on [4Fe-4S] cluster as a cofactor.

It is found in the cytoplasm. It carries out the reaction L-aspartate(89)-[ribosomal protein uS12]-hydrogen + (sulfur carrier)-SH + AH2 + 2 S-adenosyl-L-methionine = 3-methylsulfanyl-L-aspartate(89)-[ribosomal protein uS12]-hydrogen + (sulfur carrier)-H + 5'-deoxyadenosine + L-methionine + A + S-adenosyl-L-homocysteine + 2 H(+). Its function is as follows. Catalyzes the methylthiolation of an aspartic acid residue of ribosomal protein uS12. The sequence is that of Ribosomal protein uS12 methylthiotransferase RimO from Chloroherpeton thalassium (strain ATCC 35110 / GB-78).